The sequence spans 300 residues: Interferon-stimulated gene 20 kDa protein (300 aa).

Residues Asp-11, Glu-13, Asp-90, and His-93 each contribute to the Mn(2+) site.

The protein belongs to the exonuclease superfamily. As to quaternary structure, associates with PML and SP100 in the PML NB complex. Associates with survival motor neuron protein (SMN)-containing macromolecular nuclear complexes and U1 and U2 snRNAs and U3 snoRNA. Mn(2+) serves as cofactor.

Its subcellular location is the nucleus. It is found in the nucleolus. The protein localises to the cytoplasm. It localises to the cajal body. The protein resides in the P-body. It carries out the reaction Exonucleolytic cleavage in the 3'- to 5'-direction to yield nucleoside 5'-phosphates.. Its function is as follows. Interferon-induced antiviral exoribonuclease that acts mainly on single-stranded RNA. Inhibition of several viruses does not involve the degradation of viral RNAs, but rather the inhibition of translation of viral proteins. Exerts a translational control over a large panel of non-self RNA substrates while sparing endogenous transcripts. This activity correlates with the protein's ability to localize in cytoplasmic processing bodies. May also act as master regulator of over hundred interferon stimulated genes leading to viral genome translation inhibition. May play additional roles in the maturation of snRNAs and rRNAs, and in ribosome biogenesis. The sequence is that of Interferon-stimulated gene 20 kDa protein (Isg20) from Mus musculus (Mouse).